A 388-amino-acid polypeptide reads, in one-letter code: Succinate--CoA ligase [ADP-forming] subunit beta (388 aa).

The ATP-grasp domain occupies lysine 9 to histidine 244. Residues lysine 46, glycine 53–glycine 55, glutamate 99, serine 102, and glutamate 107 contribute to the ATP site. 2 residues coordinate Mg(2+): asparagine 199 and aspartate 213. Substrate contacts are provided by residues asparagine 264 and glycine 321–valine 323.

Belongs to the succinate/malate CoA ligase beta subunit family. Heterotetramer of two alpha and two beta subunits. Mg(2+) is required as a cofactor.

The catalysed reaction is succinate + ATP + CoA = succinyl-CoA + ADP + phosphate. It catalyses the reaction GTP + succinate + CoA = succinyl-CoA + GDP + phosphate. The protein operates within carbohydrate metabolism; tricarboxylic acid cycle; succinate from succinyl-CoA (ligase route): step 1/1. In terms of biological role, succinyl-CoA synthetase functions in the citric acid cycle (TCA), coupling the hydrolysis of succinyl-CoA to the synthesis of either ATP or GTP and thus represents the only step of substrate-level phosphorylation in the TCA. The beta subunit provides nucleotide specificity of the enzyme and binds the substrate succinate, while the binding sites for coenzyme A and phosphate are found in the alpha subunit. The sequence is that of Succinate--CoA ligase [ADP-forming] subunit beta from Aliivibrio fischeri (strain ATCC 700601 / ES114) (Vibrio fischeri).